Reading from the N-terminus, the 374-residue chain is Protein-glutamate methylesterase/protein-glutamine glutaminase (374 aa).

Residues 4–121 (KVLVVDDSGF…SRNPDKVKQM (118 aa)) enclose the Response regulatory domain. 4-aspartylphosphate is present on Asp55. The disordered stretch occupies residues 144–186 (PVAAPVPASSPAPASSFASPAPARPAATARAAAPAASHSPAPK). Residues 154–183 (PAPASSFASPAPARPAATARAAAPAASHSP) are compositionally biased toward low complexity. The region spanning 183-374 (PAPKRKPYKL…IGKHLVEACV (192 aa)) is the CheB-type methylesterase domain. Active-site residues include Ser198, His225, and Asp318.

The protein belongs to the CheB family. Post-translationally, phosphorylated by CheA. Phosphorylation of the N-terminal regulatory domain activates the methylesterase activity.

Its subcellular location is the cytoplasm. The catalysed reaction is [protein]-L-glutamate 5-O-methyl ester + H2O = L-glutamyl-[protein] + methanol + H(+). It catalyses the reaction L-glutaminyl-[protein] + H2O = L-glutamyl-[protein] + NH4(+). Its function is as follows. Involved in chemotaxis. Part of a chemotaxis signal transduction system that modulates chemotaxis in response to various stimuli. Catalyzes the demethylation of specific methylglutamate residues introduced into the chemoreceptors (methyl-accepting chemotaxis proteins or MCP) by CheR. Also mediates the irreversible deamidation of specific glutamine residues to glutamic acid. This Pseudomonas putida (Arthrobacter siderocapsulatus) protein is Protein-glutamate methylesterase/protein-glutamine glutaminase.